Consider the following 399-residue polypeptide: Zinc metalloproteinase nas-25 (399 aa).

The N-terminal stretch at methionine 1–cysteine 20 is a signal peptide. The Peptidase M12A domain maps to glutamine 41–tyrosine 237. N-linked (GlcNAc...) asparagine glycans are attached at residues asparagine 52 and asparagine 61. Cystine bridges form between cysteine 82–cysteine 236, cysteine 106–cysteine 126, cysteine 240–cysteine 260, and cysteine 265–cysteine 274. Histidine 134 is a binding site for Zn(2+). Glutamate 135 is a catalytic residue. Zn(2+)-binding residues include histidine 138 and histidine 144. The 44-residue stretch at glutamine 232–aspartate 275 folds into the EGF-like domain. The N-linked (GlcNAc...) asparagine glycan is linked to asparagine 371.

Requires Zn(2+) as cofactor. In terms of tissue distribution, expressed in pharyngeal muscles, pharyngeal-intestinal valve, rectal gland cells and arcade cells.

The protein localises to the secreted. Its function is as follows. Metalloprotease. This chain is Zinc metalloproteinase nas-25 (nas-25), found in Caenorhabditis elegans.